Consider the following 488-residue polypeptide: Probable phenylalanine--tRNA ligase alpha subunit (488 aa).

The segment at 1–146 (MSIEQDILNL…KRKLVDINKK (146 aa)) is contains the major tRNA-Phe binding sites. L-phenylalanine contacts are provided by residues threonine 315, 363–365 (QVE), and tyrosine 403. Position 405 (glutamate 405) interacts with Mg(2+). An L-phenylalanine-binding site is contributed by phenylalanine 429.

This sequence belongs to the class-II aminoacyl-tRNA synthetase family. Phe-tRNA synthetase alpha subunit type 2 subfamily. As to quaternary structure, tetramer of two alpha and two beta subunits. Mg(2+) is required as a cofactor.

The protein localises to the cytoplasm. The catalysed reaction is tRNA(Phe) + L-phenylalanine + ATP = L-phenylalanyl-tRNA(Phe) + AMP + diphosphate + H(+). The protein is Probable phenylalanine--tRNA ligase alpha subunit of Enterocytozoon bieneusi (strain H348) (Microsporidian parasite).